Reading from the N-terminus, the 384-residue chain is S-adenosylmethionine synthase (384 aa).

H15 provides a ligand contact to ATP. D17 contributes to the Mg(2+) binding site. E43 is a binding site for K(+). E56 and Q99 together coordinate L-methionine. The tract at residues 99 to 109 (QSPDINQGVDK) is flexible loop. ATP contacts are provided by residues 164-166 (DAK), 230-231 (RF), D239, 245-246 (RK), A262, and K266. D239 contacts L-methionine. K270 contacts L-methionine.

The protein belongs to the AdoMet synthase family. In terms of assembly, homotetramer; dimer of dimers. Requires Mg(2+) as cofactor. The cofactor is K(+).

It is found in the cytoplasm. It carries out the reaction L-methionine + ATP + H2O = S-adenosyl-L-methionine + phosphate + diphosphate. Its pathway is amino-acid biosynthesis; S-adenosyl-L-methionine biosynthesis; S-adenosyl-L-methionine from L-methionine: step 1/1. Its function is as follows. Catalyzes the formation of S-adenosylmethionine (AdoMet) from methionine and ATP. The overall synthetic reaction is composed of two sequential steps, AdoMet formation and the subsequent tripolyphosphate hydrolysis which occurs prior to release of AdoMet from the enzyme. The chain is S-adenosylmethionine synthase from Vibrio parahaemolyticus serotype O3:K6 (strain RIMD 2210633).